A 504-amino-acid polypeptide reads, in one-letter code: Cytochrome P450 2K4 (504 aa).

Heme is bound at residue Cys-447.

This sequence belongs to the cytochrome P450 family. Requires heme as cofactor.

The protein resides in the endoplasmic reticulum membrane. The protein localises to the microsome membrane. The catalysed reaction is an organic molecule + reduced [NADPH--hemoprotein reductase] + O2 = an alcohol + oxidized [NADPH--hemoprotein reductase] + H2O + H(+). The polypeptide is Cytochrome P450 2K4 (cyp2k4) (Oncorhynchus mykiss (Rainbow trout)).